A 351-amino-acid chain; its full sequence is Methylthioribose-1-phosphate isomerase (351 aa).

Residues 51-53 (RGA), Arg-94, and Gln-199 each bind substrate. Asp-240 serves as the catalytic Proton donor. 250–251 (NK) is a substrate binding site.

The protein belongs to the EIF-2B alpha/beta/delta subunits family. MtnA subfamily. Homodimer.

The enzyme catalyses 5-(methylsulfanyl)-alpha-D-ribose 1-phosphate = 5-(methylsulfanyl)-D-ribulose 1-phosphate. The protein operates within amino-acid biosynthesis; L-methionine biosynthesis via salvage pathway; L-methionine from S-methyl-5-thio-alpha-D-ribose 1-phosphate: step 1/6. In terms of biological role, catalyzes the interconversion of methylthioribose-1-phosphate (MTR-1-P) into methylthioribulose-1-phosphate (MTRu-1-P). This chain is Methylthioribose-1-phosphate isomerase, found in Bacillus anthracis.